Consider the following 304-residue polypeptide: Ribonuclease Z (304 aa).

7 residues coordinate Zn(2+): histidine 63, histidine 65, aspartate 67, histidine 68, histidine 143, aspartate 213, and histidine 271. The active-site Proton acceptor is the aspartate 67.

Belongs to the RNase Z family. Homodimer. Zn(2+) is required as a cofactor.

The enzyme catalyses Endonucleolytic cleavage of RNA, removing extra 3' nucleotides from tRNA precursor, generating 3' termini of tRNAs. A 3'-hydroxy group is left at the tRNA terminus and a 5'-phosphoryl group is left at the trailer molecule.. Its function is as follows. Zinc phosphodiesterase, which displays some tRNA 3'-processing endonuclease activity. Probably involved in tRNA maturation, by removing a 3'-trailer from precursor tRNA. The chain is Ribonuclease Z from Parabacteroides distasonis (strain ATCC 8503 / DSM 20701 / CIP 104284 / JCM 5825 / NCTC 11152).